Reading from the N-terminus, the 265-residue chain is Thymidine kinase 2, mitochondrial (265 aa).

A mitochondrion-targeting transit peptide spans Met-1–Arg-33. The segment covering Ser-21–Ser-31 has biased composition (low complexity). The interval Ser-21–Arg-45 is disordered. Gly-57 to Thr-65 is an ATP binding site. The active-site Proton acceptor is the Glu-133.

Belongs to the DCK/DGK family. As to quaternary structure, homodimer.

The protein resides in the mitochondrion. The enzyme catalyses thymidine + ATP = dTMP + ADP + H(+). It carries out the reaction 2'-deoxycytidine + ATP = dCMP + ADP + H(+). It catalyses the reaction 2'-deoxyuridine + ATP = dUMP + ADP + H(+). Phosphorylates thymidine, deoxycytidine, and deoxyuridine in the mitochondrial matrix. In non-replicating cells, where cytosolic dNTP synthesis is down-regulated, mtDNA synthesis depends solely on TK2 and DGUOK. The sequence is that of Thymidine kinase 2, mitochondrial (TK2) from Macaca fascicularis (Crab-eating macaque).